A 309-amino-acid polypeptide reads, in one-letter code: NAD kinase (309 aa).

The active-site Proton acceptor is Asp-89. NAD(+)-binding positions include 89–90 (DG), 163–164 (NE), His-174, Arg-191, Asp-193, and 204–209 (TAYALS).

It belongs to the NAD kinase family. A divalent metal cation is required as a cofactor.

It is found in the cytoplasm. The enzyme catalyses NAD(+) + ATP = ADP + NADP(+) + H(+). Its function is as follows. Involved in the regulation of the intracellular balance of NAD and NADP, and is a key enzyme in the biosynthesis of NADP. Catalyzes specifically the phosphorylation on 2'-hydroxyl of the adenosine moiety of NAD to yield NADP. This is NAD kinase from Shewanella sp. (strain W3-18-1).